Consider the following 576-residue polypeptide: Arginine--tRNA ligase (576 aa).

A 'HIGH' region motif is present at residues 126–136; that stretch reads ANPTGPMHIGH.

Belongs to the class-I aminoacyl-tRNA synthetase family. As to quaternary structure, monomer.

Its subcellular location is the cytoplasm. The enzyme catalyses tRNA(Arg) + L-arginine + ATP = L-arginyl-tRNA(Arg) + AMP + diphosphate. This Rickettsia canadensis (strain McKiel) protein is Arginine--tRNA ligase.